Here is a 240-residue protein sequence, read N- to C-terminus: CD302 antigen (240 aa).

The 121-residue stretch at 40–160 folds into the C-type lectin domain; that stretch reads FQDSCYIFLQ…CEVSSVEGTL (121 aa). Asn-117 is a glycosylation site (N-linked (GlcNAc...) asparagine). An intrachain disulfide couples Cys-136 to Cys-151. A helical membrane pass occupies residues 177 to 197; it reads ILISALVIASTVILTVLGAVI. At 198 to 240 the chain is on the cytoplasmic side; sequence WFLYKRNLDSGFTTVFSTAPQSPFNDDCVLVVAEENEYAVQFD.

Its subcellular location is the membrane. It localises to the cell projection. It is found in the filopodium. The protein resides in the cytoplasm. The protein localises to the cell cortex. Its function is as follows. Potential multifunctional C-type lectin receptor that may play roles in endocytosis and phagocytosis as well as in cell adhesion and migration. This chain is CD302 antigen, found in Sus scrofa (Pig).